The chain runs to 412 residues: Glutamate-pyruvate aminotransferase AlaC (412 aa).

An N6-(pyridoxal phosphate)lysine modification is found at K244.

This sequence belongs to the class-I pyridoxal-phosphate-dependent aminotransferase family. Homodimer. It depends on pyridoxal 5'-phosphate as a cofactor.

Its subcellular location is the cytoplasm. It carries out the reaction L-alanine + 2-oxoglutarate = pyruvate + L-glutamate. The protein operates within amino-acid biosynthesis; L-alanine biosynthesis. Its function is as follows. Involved in the biosynthesis of alanine. Catalyzes the transamination of pyruvate by glutamate, leading to the formation of L-alanine and 2-oxoglutarate. Is also able to catalyze the reverse reaction. This Escherichia coli (strain K12) protein is Glutamate-pyruvate aminotransferase AlaC.